The chain runs to 1409 residues: Inositol hexakisphosphate and diphosphoinositol-pentakisphosphate kinase 1 (1409 aa).

64-65 (KK) provides a ligand contact to substrate. Residues Arg-145, Lys-198, His-205, Arg-224, 248-251 (EEFM), and 257-259 (DVK) each bind ATP. Residue 224–225 (RK) coordinates substrate. Substrate is bound by residues Lys-259 and Arg-273. ATP contacts are provided by residues Ser-275, Asp-320, and 332-334 (DVN). Position 337-340 (337-340 (SFVK)) interacts with substrate. The interval 382–453 (PTTSGTMMEL…VLDITRLLLA (72 aa)) is polyphosphoinositide-binding domain. Residues 891–996 (GVEEEGSAPA…PTEMKQSGLG (106 aa)) are disordered. Phosphoserine occurs at positions 920 and 963. Residues 981 to 996 (FSSSRPPTEMKQSGLG) are compositionally biased toward polar residues. Phosphoserine occurs at positions 1013 and 1049. The span at 1110–1119 (MHSSQASDNP) shows a compositional bias: polar residues. Positions 1110 to 1183 (MHSSQASDNP…PSLNSHVAEE (74 aa)) are disordered. Residues Ser-1121 and Ser-1128 each carry the phosphoserine modification. Residues 1144–1162 (SSGPSSTVSSAGPSSPTTV) show a composition bias toward low complexity. Polar residues predominate over residues 1163-1178 (DGNSQFGFSDQPSLNS).

This sequence belongs to the histidine acid phosphatase family. VIP1 subfamily.

The protein localises to the cytoplasm. It is found in the cytosol. It localises to the cell membrane. It catalyses the reaction 1D-myo-inositol hexakisphosphate + ATP = 1-diphospho-1D-myo-inositol 2,3,4,5,6-pentakisphosphate + ADP. The enzyme catalyses 5-diphospho-1D-myo-inositol 1,2,3,4,6-pentakisphosphate + ATP + H(+) = 1,5-bis(diphospho)-1D-myo-inositol 2,3,4,6-tetrakisphosphate + ADP. Functionally, bifunctional inositol kinase that acts in concert with the IP6K kinases IP6K1, IP6K2 and IP6K3 to synthesize the diphosphate group-containing inositol pyrophosphates diphosphoinositol pentakisphosphate, PP-InsP5, and bis-diphosphoinositol tetrakisphosphate, (PP)2-InsP4. PP-InsP5 and (PP)2-InsP4, also respectively called InsP7 and InsP8, regulate a variety of cellular processes, including apoptosis, vesicle trafficking, cytoskeletal dynamics, exocytosis, insulin signaling and neutrophil activation. Phosphorylates inositol hexakisphosphate (InsP6) at position 1 to produce PP-InsP5 which is in turn phosphorylated by IP6Ks to produce (PP)2-InsP4. Alternatively, phosphorylates PP-InsP5 at position 1, produced by IP6Ks from InsP6, to produce (PP)2-InsP4. Activated when cells are exposed to hyperosmotic stress. The chain is Inositol hexakisphosphate and diphosphoinositol-pentakisphosphate kinase 1 from Pongo abelii (Sumatran orangutan).